We begin with the raw amino-acid sequence, 91 residues long: UPF0213 protein NMC1807 (91 aa).

Residues 4-83 (SNWSVYLILC…AAQKRQLWEQ (80 aa)) enclose the GIY-YIG domain.

The protein belongs to the UPF0213 family.

The protein is UPF0213 protein NMC1807 of Neisseria meningitidis serogroup C / serotype 2a (strain ATCC 700532 / DSM 15464 / FAM18).